A 283-amino-acid polypeptide reads, in one-letter code: Pantothenate synthetase (283 aa).

34–41 (MGALHDGH) serves as a coordination point for ATP. The active-site Proton donor is His-41. A (R)-pantoate-binding site is contributed by Gln-65. Residue Gln-65 coordinates beta-alanine. Residue 152 to 155 (GEKD) coordinates ATP. Gln-158 provides a ligand contact to (R)-pantoate. Residues Val-181 and 189-192 (MSSR) each bind ATP.

It belongs to the pantothenate synthetase family. Homodimer.

The protein resides in the cytoplasm. It carries out the reaction (R)-pantoate + beta-alanine + ATP = (R)-pantothenate + AMP + diphosphate + H(+). The protein operates within cofactor biosynthesis; (R)-pantothenate biosynthesis; (R)-pantothenate from (R)-pantoate and beta-alanine: step 1/1. In terms of biological role, catalyzes the condensation of pantoate with beta-alanine in an ATP-dependent reaction via a pantoyl-adenylate intermediate. In Bradyrhizobium sp. (strain BTAi1 / ATCC BAA-1182), this protein is Pantothenate synthetase.